The following is a 284-amino-acid chain: MVKAVVGFGAACGISAIVACLWAALVITNDINDMYDDVMGELGGFRDISDDTWGTLLDVRHGAGESAEQYVRGIFGRHKRSNSQCSCGLPSQGCPAGAPGNPGAPGEPGGTGPDGKNGPTGLPGLNIPIPNDFPKECIKCPAGPPGQDGLPGQEGFQGLPGDAGKRGTPGKDGEPGRVGDIGDQGTPGQDGQPGLAGPPGRDGLTGKGQPGVAGRPGMPGPRGEPGNNGNPGEEGQTGAQGPTGQPGKDGFNGNDGTPGQAGPQGAVGADAEYCPCPERKRRRV.

A disordered region spans residues 88–284 (GLPSQGCPAG…PCPERKRRRV (197 aa)). Triple-helical region regions lie at residues 94-126 (CPAG…PGLN) and 143-270 (GPPG…VGAD). A compositionally biased stretch (gly residues) spans 106–115 (GEPGGTGPDG). The segment covering 163–177 (AGKRGTPGKDGEPGR) has biased composition (basic and acidic residues). Low complexity-rich tracts occupy residues 181–193 (IGDQ…DGQP), 224–246 (EPGN…TGQP), and 255–271 (DGTP…GADA).

The protein belongs to the cuticular collagen family. Collagen polypeptide chains are complexed within the cuticle by disulfide bonds and other types of covalent cross-links. In terms of processing, may be a substrate of bli-4.

Nematode cuticles are composed largely of collagen-like proteins. The cuticle functions both as an exoskeleton and as a barrier to protect the worm from its environment. The protein is Cuticle collagen dpy-5 (dpy-5) of Caenorhabditis elegans.